A 316-amino-acid chain; its full sequence is Olfactory receptor 12D3 (316 aa).

Residues 1–23 (MENVTTMNEFLLLGLTGVQELQP) are Extracellular-facing. N3 is a glycosylation site (N-linked (GlcNAc...) asparagine). A helical transmembrane segment spans residues 24 to 44 (FFFGIFLIIYLINLIGNGSIL). Residues 45–52 (VMVVLEPQ) lie on the Cytoplasmic side of the membrane. The chain crosses the membrane as a helical span at residues 53 to 73 (LHSPMYFFLGNLSCLDISYSS). The Extracellular portion of the chain corresponds to 74-97 (VTLPKLLVNLVCSRRAISFLGCIT). Cysteines 95 and 187 form a disulfide. Residues 98-118 (QLHFFHFLGSTEAILLAIMAF) form a helical membrane-spanning segment. Over 119–137 (DRFVAICNPLRYTVIMNPQ) the chain is Cytoplasmic. A helical transmembrane segment spans residues 138 to 158 (VCILLAAAAWLISFFYALMHS). Over 159–195 (VMTAHLSFCGSQKLNHFFYDVKPLLELACSDTLLNQW) the chain is Extracellular. A helical membrane pass occupies residues 196-215 (LLSIVTGSISMGAFFLTLLS). Residues 216-236 (CFYVIGFLLFKNRSCRILHKA) lie on the Cytoplasmic side of the membrane. The chain crosses the membrane as a helical span at residues 237-257 (LSTCASHFMVVCLFYGPVGFT). The Extracellular segment spans residues 258 to 270 (YIRPASATSMIQD). Residues 271 to 291 (RIMAIMYSAVTPVLNPLIYTL) form a helical membrane-spanning segment. The Cytoplasmic segment spans residues 292-316 (RNKEVMMALKKIFGRKLFKDWQQHH).

This sequence belongs to the G-protein coupled receptor 1 family.

It is found in the cell membrane. Odorant receptor. The polypeptide is Olfactory receptor 12D3 (OR12D3) (Homo sapiens (Human)).